The chain runs to 150 residues: Transcription antitermination protein NusB (150 aa).

This sequence belongs to the NusB family.

Its function is as follows. Involved in transcription antitermination. Required for transcription of ribosomal RNA (rRNA) genes. Binds specifically to the boxA antiterminator sequence of the ribosomal RNA (rrn) operons. This Streptococcus equi subsp. zooepidemicus (strain H70) protein is Transcription antitermination protein NusB.